A 201-amino-acid polypeptide reads, in one-letter code: Holliday junction branch migration complex subunit RuvA (201 aa).

The domain I stretch occupies residues 1-64 (MYEYIKGKYI…QDFIGLYGFL (64 aa)). Positions 65–143 (TKDELEMFNK…STDISKGNSE (79 aa)) are domain II. Positions 144–154 (INNLDVDYDEH) are flexible linker. Positions 154-201 (HSKKLEEVRFALNSLGYSEKETDRAINNVDKSEGIENIIKSCLRFLMN) are domain III.

It belongs to the RuvA family. As to quaternary structure, homotetramer. Forms an RuvA(8)-RuvB(12)-Holliday junction (HJ) complex. HJ DNA is sandwiched between 2 RuvA tetramers; dsDNA enters through RuvA and exits via RuvB. An RuvB hexamer assembles on each DNA strand where it exits the tetramer. Each RuvB hexamer is contacted by two RuvA subunits (via domain III) on 2 adjacent RuvB subunits; this complex drives branch migration. In the full resolvosome a probable DNA-RuvA(4)-RuvB(12)-RuvC(2) complex forms which resolves the HJ.

The protein localises to the cytoplasm. Its function is as follows. The RuvA-RuvB-RuvC complex processes Holliday junction (HJ) DNA during genetic recombination and DNA repair, while the RuvA-RuvB complex plays an important role in the rescue of blocked DNA replication forks via replication fork reversal (RFR). RuvA specifically binds to HJ cruciform DNA, conferring on it an open structure. The RuvB hexamer acts as an ATP-dependent pump, pulling dsDNA into and through the RuvAB complex. HJ branch migration allows RuvC to scan DNA until it finds its consensus sequence, where it cleaves and resolves the cruciform DNA. The protein is Holliday junction branch migration complex subunit RuvA of Clostridium acetobutylicum (strain ATCC 824 / DSM 792 / JCM 1419 / IAM 19013 / LMG 5710 / NBRC 13948 / NRRL B-527 / VKM B-1787 / 2291 / W).